Consider the following 483-residue polypeptide: E3 ubiquitin-protein ligase TRIM50 (483 aa).

The segment at 16 to 57 (CPICLEVFKEPLMLQCGHSYCKDCLDNLSQHLDSELCCPVCR) adopts an RING-type zinc-finger fold. The B box-type zinc finger occupies 84-125 (IEPTVCVHHRNPLSLFCEKDQEFICGLCGLLGSHQHHRVTPV). Zn(2+)-binding residues include Cys-89, His-92, Cys-111, and His-117. Coiled coils occupy residues 127–169 (TVYS…NESD) and 203–236 (GLVASLDMQLEQAQGTQERLAQAEQVLEQFGNES). The B30.2/SPRY domain maps to 275-474 (DIKLTVWKRL…LPMVLPPPSG (200 aa)). N6-acetyllysine is present on Lys-372.

It belongs to the TRIM/RBCC family. In terms of assembly, can form dimers and trimers. Interacts with several E2 ubiquitin-conjugating enzymes, including UBE2L6, UBE2E1, UBE2E3. No interaction with UBE2H. Interacts with BECN1. Interacts with SQSTM1. Interacts with NLRP3. Auto-ubiquitinated. Post-translationally, acetylated by EP300 and KAT2B. HDAC6 drives TRIM50 deacetylation. Acetylation antagonizes with TRIM50 ubiquitination. In terms of tissue distribution, expressed in the stomach.

The protein localises to the cytoplasm. It carries out the reaction S-ubiquitinyl-[E2 ubiquitin-conjugating enzyme]-L-cysteine + [acceptor protein]-L-lysine = [E2 ubiquitin-conjugating enzyme]-L-cysteine + N(6)-ubiquitinyl-[acceptor protein]-L-lysine.. E3 ubiquitin-protein ligase that ubiquitinates Beclin-1/BECN1 in a 'Lys-63'-dependent manner enhancing its binding to ULK1. In turn, promotes starvation-induced autophagy activation. Also interacts with p62/SQSTM1 protein and thereby induces the formation and the autophagy clearance of aggresome-associated polyubiquitinated proteins through HDAC6 interaction. Also promotes NLRP3 inflammasome activation by directly inducing NLRP3 oligomerization independent of its E3 ligase function. This chain is E3 ubiquitin-protein ligase TRIM50 (Trim50), found in Mus musculus (Mouse).